The sequence spans 113 residues: UPF0060 membrane protein Mmcs_2513 (113 aa).

Helical transmembrane passes span 12–32 (ALFV…WQGV), 37–57 (GWIW…VAAF), 66–86 (ILAA…VVVD), and 92–112 (RWDL…MYAP).

It belongs to the UPF0060 family.

It localises to the cell membrane. This chain is UPF0060 membrane protein Mmcs_2513, found in Mycobacterium sp. (strain MCS).